Consider the following 215-residue polypeptide: Cytochrome b6 (215 aa).

The chain crosses the membrane as a helical span at residues Ile-32–Phe-52. Cys-35 contacts heme c. Heme b-binding residues include His-86 and His-100. The next 3 helical transmembrane spans lie at Ala-90–Phe-110, Leu-116–Tyr-136, and Leu-186–Ile-206. The heme b site is built by His-187 and His-202.

The protein belongs to the cytochrome b family. PetB subfamily. As to quaternary structure, the 4 large subunits of the cytochrome b6-f complex are cytochrome b6, subunit IV (17 kDa polypeptide, PetD), cytochrome f and the Rieske protein, while the 4 small subunits are PetG, PetL, PetM and PetN. The complex functions as a dimer. The cofactor is heme b. Heme c serves as cofactor.

Its subcellular location is the plastid. It localises to the chloroplast thylakoid membrane. Component of the cytochrome b6-f complex, which mediates electron transfer between photosystem II (PSII) and photosystem I (PSI), cyclic electron flow around PSI, and state transitions. The sequence is that of Cytochrome b6 from Tupiella akineta (Green alga).